The sequence spans 547 residues: Chaperonin GroEL (547 aa).

ATP is bound by residues 30 to 33 (TLGP), Lys-51, 87 to 91 (DGTTT), Gly-415, 479 to 481 (NAA), and Asp-495.

This sequence belongs to the chaperonin (HSP60) family. As to quaternary structure, forms a cylinder of 14 subunits composed of two heptameric rings stacked back-to-back. Interacts with the co-chaperonin GroES.

Its subcellular location is the cytoplasm. The catalysed reaction is ATP + H2O + a folded polypeptide = ADP + phosphate + an unfolded polypeptide.. Together with its co-chaperonin GroES, plays an essential role in assisting protein folding. The GroEL-GroES system forms a nano-cage that allows encapsulation of the non-native substrate proteins and provides a physical environment optimized to promote and accelerate protein folding. The polypeptide is Chaperonin GroEL (Pseudomonas paraeruginosa (strain DSM 24068 / PA7) (Pseudomonas aeruginosa (strain PA7))).